A 420-amino-acid chain; its full sequence is Methyltransferase/ribosomally synthesized cyclic peptide gymnopeptides precursor gymMA1 (420 aa).

Residues 1–251 (MQSSTQKQAG…GISTFYIPPK (251 aa)) form a methyltransferase domain region. Active-site residues include R72, Y76, and Y98. Residues Y98, H100, V103, A130, Q172, A213, S244, and T245 each contribute to the S-adenosyl-L-methionine site. The interval 252–378 (ELKDPSMDIM…WALRCAMKKM (127 aa)) is clasp domain. The interval 379 to 392 (PSSFMDEVDANNLP) is precursor leader. 2 positions are modified to N-methylvaline: V394 and V396. Position 398 is an N-methylglycine (G398). V399 is subject to N-methylvaline. A400 bears the N-methylalanine mark. G402 carries the N-methylglycine modification. 4 positions are modified to N-methylvaline: V404, V406, V408, and V410.

It in the N-terminal section; belongs to the precorrin methyltransferase family. As to quaternary structure, homodimer. Post-translationally, gymMA1 automethylates at Val-394, Val-396, Gly-398, Val-399, Ala-400, Gly-402, Val-404, Val-406, Val-408 and Val-410 before being processed by a prolyloligopeptidase which likely forms a peptidyl ester upon removal of the follower propeptide, which then undergoes macrocyclization with the N-terminus of the modified core peptide. Peptide backbone alpha-N-methylations change the physicochemical properties of amide bonds to provide structural constraints and other favorable characteristics including biological membrane permeability to peptides.

It participates in mycotoxin biosynthesis. Fusion protein of the methyltransferase gymM1 and the gymnopeptides precursor; part of the gene cluster that mediates the biosynthesis of gymnopeptides, highly methylated cyclic octadecapeptides with striking antiproliferative activity on several human cancer cell lines. Gymnopeptides derive from the C-terminus of the gymMA1 protein, and it is the gymMA1 protein that methylates its own C-terminus using S-adenosyl methionine (SAM). The C-terminus is subsequently cleaved off and macrocyclized by a prolyloligopeptidase to give the final product. In Gymnopus fusipes (Spindle toughshank), this protein is Methyltransferase/ribosomally synthesized cyclic peptide gymnopeptides precursor gymMA1.